A 149-amino-acid chain; its full sequence is D-aminoacyl-tRNA deacylase (149 aa).

The Gly-cisPro motif, important for rejection of L-amino acids motif lies at 137–138 (GP).

Belongs to the DTD family. Homodimer.

It localises to the cytoplasm. It carries out the reaction glycyl-tRNA(Ala) + H2O = tRNA(Ala) + glycine + H(+). It catalyses the reaction a D-aminoacyl-tRNA + H2O = a tRNA + a D-alpha-amino acid + H(+). In terms of biological role, an aminoacyl-tRNA editing enzyme that deacylates mischarged D-aminoacyl-tRNAs. Also deacylates mischarged glycyl-tRNA(Ala), protecting cells against glycine mischarging by AlaRS. Acts via tRNA-based rather than protein-based catalysis; rejects L-amino acids rather than detecting D-amino acids in the active site. By recycling D-aminoacyl-tRNA to D-amino acids and free tRNA molecules, this enzyme counteracts the toxicity associated with the formation of D-aminoacyl-tRNA entities in vivo and helps enforce protein L-homochirality. The polypeptide is D-aminoacyl-tRNA deacylase (Syntrophotalea carbinolica (strain DSM 2380 / NBRC 103641 / GraBd1) (Pelobacter carbinolicus)).